The following is a 593-amino-acid chain: Developmental and secondary metabolism regulator VEL1 (593 aa).

Over residues 1-16 the composition is skewed to polar residues; it reads MSNIVVSNETKSQSVR. The interval 1 to 21 is disordered; the sequence is MSNIVVSNETKSQSVRTTKDG. The Velvet domain maps to 21 to 212; sequence GRQIRYNLQV…AEQGCRVRIR (192 aa). Residues 35 to 40 carry the Nuclear localization signal motif; it reads ERARAC. A disordered region spans residues 218–569; that stretch reads RRRENKSSKE…PGSPDMEEPM (352 aa). Low complexity predominate over residues 310–326; it reads PSYGSNQPQYSQQYQTP. Pro residues predominate over residues 327 to 340; it reads QPAPMMQPPQPPQH. 2 stretches are compositionally biased toward low complexity: residues 341–360 and 367–389; these read STPY…HQAQ and QQYG…QPQY. 2 stretches are compositionally biased toward polar residues: residues 413–429 and 440–449; these read SSIT…SSHP and GRSQQMSQPL. The interval 443-487 is PEST; that stretch reads QQMSQPLHSSPQSYASSAPSHQSLPSLRPIVADKLEPVSPSYQSP. Over residues 450-465 the composition is skewed to low complexity; that stretch reads HSSPQSYASSAPSHQS. 2 stretches are compositionally biased toward polar residues: residues 482 to 505 and 512 to 534; these read PSYQ…SNQH and NPQT…SSTF.

The protein belongs to the velvet family. VeA subfamily. As to quaternary structure, component of the heterotrimeric velvet complex composed of LAE1, VEL1 and VEL2; VEL1 acting as a bridging protein between LAE1 and VEL2.

Its subcellular location is the nucleus. It localises to the cytoplasm. Its function is as follows. Component of the velvet transcription factor complex that controls sexual/asexual developmental ratio in response to light, promoting sexual development in the darkness while stimulating asexual sporulation under illumination. The velvet complex acts as a global regulator for secondary metabolite gene expression. Controls the expression of the T-toxin gene cluster. Promotes oxidative stress tolerance and acts as a virulence factors during infection. Negatively regulate mycelial pigmentation and controls sexual development, as well as asexual development during vegetative growth. This Cochliobolus heterostrophus (strain C5 / ATCC 48332 / race O) (Southern corn leaf blight fungus) protein is Developmental and secondary metabolism regulator VEL1.